A 308-amino-acid polypeptide reads, in one-letter code: MSVRGRVAPSQTPSRIPGTVLAYLALTKPRVIELLLVTAIPAMLLAQRGTVNPLLIVNTLIGGMLAAGGANALNCVADADIDKVMKRTARRPLARAAVPTRNALVFGLVLTAGSFLWLWWTTNLLSGLLALATIAFYVFIYTLLLKRRTSQNVVWGGAAGCMPVMIGWSAVTGTIQWPALVMFAIIFFWTPPHTWALAMRYKDDYKAAGVPMLPAVATERQVTKQILVYTWLTVLATLALALATGWLYAAVAVVAGVWFLAMAHQLYAGVRAGEPVKPLRLFLQSNNYLAVVFCALAIDSAIGLPHLF.

The next 8 helical transmembrane spans lie at 31–51 (VIEL…RGTV), 53–73 (PLLI…ANAL), 102–122 (NALV…WWTT), 124–144 (LLSG…YTLL), 149–169 (TSQN…IGWS), 170–190 (AVTG…FFWT), 240–260 (LALA…VWFL), and 288–308 (YLAV…PHLF).

It belongs to the UbiA prenyltransferase family. Protoheme IX farnesyltransferase subfamily.

The protein localises to the cell membrane. It carries out the reaction heme b + (2E,6E)-farnesyl diphosphate + H2O = Fe(II)-heme o + diphosphate. The protein operates within porphyrin-containing compound metabolism; heme O biosynthesis; heme O from protoheme: step 1/1. Functionally, converts heme B (protoheme IX) to heme O by substitution of the vinyl group on carbon 2 of heme B porphyrin ring with a hydroxyethyl farnesyl side group. The protein is Protoheme IX farnesyltransferase of Mycobacterium avium (strain 104).